A 121-amino-acid polypeptide reads, in one-letter code: Basic phospholipase A2 CoaTx-II (121 aa).

Intrachain disulfides connect Cys26/Cys115, Cys28/Cys44, Cys43/Cys95, Cys49/Cys121, Cys50/Cys88, Cys57/Cys81, and Cys75/Cys86. Residues Lys105–Lys117 form an important for membrane-damaging activities in eukaryotes and bacteria; heparin-binding region.

The protein belongs to the phospholipase A2 family. Group II subfamily. K49 sub-subfamily. In terms of assembly, homodimer; non-covalently-linked. In terms of tissue distribution, expressed by the venom gland.

The protein localises to the secreted. Functionally, snake venom phospholipase A2 (PLA2) that lacks enzymatic inactivity. It shows antibacterial activity against both Gram-negative and Gram-positive bacteria, including methicillin-resistant strains. In vivo, it causes local muscular damage, but no systemic damage (intravenous administration does not elevate plasma creatine kinase). Also causes an inflammatory activity that is demonstrated by mice paw edema induction and pro-inflammatory cytokine IL-6 elevation. A model of myotoxic mechanism has been proposed: an apo Lys49-PLA2 is activated by the entrance of a hydrophobic molecule (e.g. fatty acid) at the hydrophobic channel of the protein leading to a reorientation of a monomer. This reorientation causes a transition between 'inactive' to 'active' states, causing alignment of C-terminal and membrane-docking sites (MDoS) side-by-side and putting the membrane-disruption sites (MDiS) in the same plane, exposed to solvent and in a symmetric position for both monomers. The MDoS region stabilizes the toxin on membrane by the interaction of charged residues with phospholipid head groups. Subsequently, the MDiS region destabilizes the membrane with penetration of hydrophobic residues. This insertion causes a disorganization of the membrane, allowing an uncontrolled influx of ions (i.e. calcium and sodium), and eventually triggering irreversible intracellular alterations and cell death. The chain is Basic phospholipase A2 CoaTx-II from Crotalus lutosus abyssus (Grand Canyon rattlesnake).